The chain runs to 790 residues: SH3 domain-containing protein 19 (790 aa).

Disordered regions lie at residues 21 to 196 (EGQT…PVLQ) and 241 to 374 (EPIK…MDLQ). Ser-65 is subject to Phosphoserine. Residues 287-296 (NTFSTVSGKL) are compositionally biased toward polar residues. Over residues 336-351 (QQPPTKVPPERPPPPK) the composition is skewed to pro residues. Positions 342–358 (VPPERPPPPKLSATRRS) are interaction with SH3GL1. The span at 365 to 374 (NRSSSDMDLQ) shows a compositional bias: polar residues. Phosphoserine is present on Ser-369. SH3 domains are found at residues 415 to 477 (LSVP…PLDE), 495 to 554 (SGAP…VIID), 571 to 630 (VKGS…PVED), 661 to 720 (LPAE…PCPA), and 730 to 789 (PKGR…FLQI). A Phosphoserine modification is found at Ser-762.

As to quaternary structure, interacts with ADAM12. Isoform 4 and isoform 5 (but not isoform 1 and isoform 2) interact with ADAM9, ADAM10, ADAM15 and ADAM17. Interacts with SH3GL1 SH3 domain. Interacts via SH3 3 and SH3 4 or SH3 4 and SH3 5 domains with SOS2. Probably forms a trimeric complex with SH3GL1 and SOS2. Interacts with SH3YL1. In terms of tissue distribution, widely expressed with highest levels in heart, skeletal muscle, kidney, liver, placenta, small intestine and lung. Expressed at low levels in colon, thymus, spleen and leukocytes.

The protein localises to the cytoplasm. Its subcellular location is the nucleus. In terms of biological role, may play a role in regulating A disintegrin and metalloproteases (ADAMs) in the signaling of EGFR-ligand shedding. May be involved in suppression of Ras-induced cellular transformation and Ras-mediated activation of ELK1. Plays a role in the regulation of cell morphology and cytoskeletal organization. The protein is SH3 domain-containing protein 19 (SH3D19) of Homo sapiens (Human).